Consider the following 644-residue polypeptide: DNA gyrase subunit B (644 aa).

One can recognise a Toprim domain in the interval cysteine 429 to proline 543. Mg(2+)-binding residues include glutamate 435, aspartate 508, and aspartate 510.

It belongs to the type II topoisomerase GyrB family. Heterotetramer, composed of two GyrA and two GyrB chains. In the heterotetramer, GyrA contains the active site tyrosine that forms a transient covalent intermediate with DNA, while GyrB binds cofactors and catalyzes ATP hydrolysis. Mg(2+) serves as cofactor. The cofactor is Mn(2+). Requires Ca(2+) as cofactor.

Its subcellular location is the cytoplasm. It catalyses the reaction ATP-dependent breakage, passage and rejoining of double-stranded DNA.. Functionally, a type II topoisomerase that negatively supercoils closed circular double-stranded (ds) DNA in an ATP-dependent manner to modulate DNA topology and maintain chromosomes in an underwound state. Negative supercoiling favors strand separation, and DNA replication, transcription, recombination and repair, all of which involve strand separation. Also able to catalyze the interconversion of other topological isomers of dsDNA rings, including catenanes and knotted rings. Type II topoisomerases break and join 2 DNA strands simultaneously in an ATP-dependent manner. The protein is DNA gyrase subunit B of Staphylococcus aureus (strain USA300).